The chain runs to 562 residues: Phosphatidylinositol 4-phosphate 5-kinase type-1 alpha (562 aa).

The PIPK domain maps to 81-449 (TSSALKGAIQ…RFQRFMCNTV (369 aa)). A Glycyl lysine isopeptide (Lys-Gly) (interchain with G-Cter in ubiquitin) cross-link involves residue Lys-103. A Phosphoserine modification is found at Ser-486. The interval 506–526 (HLGRPDVLPQTPPLEEISEGS) is disordered.

In terms of assembly, interacts with RAC1. Interacts with TUT1. Forms a complex with CDH1/E-cadherin, CTNNB1/beta-catenin and CTNND1 at the plasma membrane upon calcium stimulation. Found in a ternary complex with IRS1 and DGKZ in the absence of insulin stimulation. Interacts with DGKZ. Interacts with PIP4K2C; the interaction inhibits PIP5K1A kinase activity. Highly expressed in heart, placenta, skeletal muscle, kidney and pancreas. Detected at lower levels in brain, lung and liver.

It is found in the cell membrane. Its subcellular location is the cytoplasm. The protein localises to the nucleus. The protein resides in the nucleus speckle. It localises to the cell projection. It is found in the ruffle. Its subcellular location is the lamellipodium. The catalysed reaction is a 1,2-diacyl-sn-glycero-3-phospho-(1D-myo-inositol 4-phosphate) + ATP = a 1,2-diacyl-sn-glycero-3-phospho-(1D-myo-inositol-4,5-bisphosphate) + ADP + H(+). It carries out the reaction 1-octadecanoyl-2-(5Z,8Z,11Z,14Z)-eicosatetraenoyl-sn-glycero-3-phospho-1D-myo-inositol 4-phosphate + ATP = 1-octadecanoyl-2-(5Z,8Z,11Z,14Z)-eicosatetraenoyl-sn-glycero-3-phospho-1D-myo-inositol 4,5-bisphosphate + ADP + H(+). The enzyme catalyses 1,2-dihexadecanoyl-sn-glycero-3-phospho-(1D-myo-inositol-4-phosphate) + ATP = 1,2-dihexadecanoyl-sn-glycero-3-phospho-(1D-myo-inositol-4,5-bisphosphate) + ADP + H(+). It catalyses the reaction 1-octadecanoyl-2-(9Z)-octadecenoyl-sn-glycero-3-phospho-1D-myo-inositol 4-phosphate + ATP = 1-octadecanoyl-2-(9Z)-octadecenoyl-sn-glycero-3-phospho-1D-myo-inositol 4,5-bisphosphate + ADP + H(+). The catalysed reaction is 1-octadecanoyl-2-(9Z)-octadecenoyl-sn-glycero-3-phospho-1D-myo-inositol + ATP = 1-octadecanoyl-2-(9Z)-octadecenoyl-sn-glycero-3-phospho-1D-myo-inositol 5-phosphate + ADP + H(+). It carries out the reaction 1-octadecanoyl-2-(9Z,12Z)-octadecadienoyl-sn-glycero-3-phospho-1D-myo-inositol + ATP = 1-octadecanoyl-2-(9Z,12Z)-octadecadienoyl-sn-glycero-3-phospho-1D-myo-inositol 5-phosphate + ADP + H(+). The enzyme catalyses 1-octadecanoyl-2-(5Z,8Z,11Z,14Z-eicosatetraenoyl)-sn-glycero-3-phospho-(1D-myo-inositol) + ATP = 1-octadecanoyl-2-(5Z,8Z,11Z,14Z)-eicosatetraenoyl-sn-glycero-3-phospho-1D-myo-inositol 5-phosphate + ADP + H(+). It catalyses the reaction 1,2-di-(9Z,12Z)-octadecadienoyl-sn-glycero-3-phospho-1D-myo-inositol + ATP = 1,2-di(9Z,12Z)-octadecadienoyl-sn-glycero-3-phospho-1D-myo-inositol 5-phosphate + ADP + H(+). Activated by diarachidonoyl phosphatidic acid (DAPA), when 1,2-dipalmitoyl-PI4P is used as a substrate. In terms of biological role, catalyzes the phosphorylation of phosphatidylinositol 4-phosphate (PtdIns(4)P/PI4P) to form phosphatidylinositol 4,5-bisphosphate (PtdIns(4,5)P2/PIP2), a lipid second messenger that regulates several cellular processes such as signal transduction, vesicle trafficking, actin cytoskeleton dynamics, cell adhesion, and cell motility. PtdIns(4,5)P2 can directly act as a second messenger or can be utilized as a precursor to generate other second messengers: inositol 1,4,5-trisphosphate (IP3), diacylglycerol (DAG) or phosphatidylinositol-3,4,5-trisphosphate (PtdIns(3,4,5)P3/PIP3). PIP5K1A-mediated phosphorylation of PtdIns(4)P is the predominant pathway for PtdIns(4,5)P2 synthesis. Can also use phosphatidylinositol (PtdIns) as substrate in vitro. Together with PIP5K1C, is required for phagocytosis, both enzymes regulating different types of actin remodeling at sequential steps. Promotes particle ingestion by activating the WAS GTPase-binding protein that induces Arp2/3 dependent actin polymerization at the nascent phagocytic cup. Together with PIP5K1B, is required, after stimulation by G-protein coupled receptors, for the synthesis of IP3 that will induce stable platelet adhesion. Recruited to the plasma membrane by the E-cadherin/beta-catenin complex where it provides the substrate PtdIns(4,5)P2 for the production of PtdIns(3,4,5)P3, IP3 and DAG, that will mobilize internal calcium and drive keratinocyte differentiation. Positively regulates insulin-induced translocation of SLC2A4 to the cell membrane in adipocytes. Together with PIP5K1C has a role during embryogenesis. Independently of its catalytic activity, is required for membrane ruffling formation, actin organization and focal adhesion formation during directional cell migration by controlling integrin-induced translocation of the small GTPase RAC1 to the plasma membrane. Also functions in the nucleus where it acts as an activator of TUT1 adenylyltransferase activity in nuclear speckles, thereby regulating mRNA polyadenylation of a select set of mRNAs. In Homo sapiens (Human), this protein is Phosphatidylinositol 4-phosphate 5-kinase type-1 alpha.